Reading from the N-terminus, the 442-residue chain is Cyclic 2,3-diphosphoglycerate synthetase (442 aa).

It belongs to the cyclic 2,3-diphosphoglycerate synthetase family.

The protein resides in the cytoplasm. The enzyme catalyses (2R)-2,3-bisphosphoglycerate + ATP + H(+) = cyclic (2R)-2,3-bisphosphoglycerate + ADP + phosphate. Functionally, catalyzes the formation of cyclic 2,3-diphosphoglycerate (cDPG) by formation of an intramolecular phosphoanhydride bond at the expense of ATP. This is Cyclic 2,3-diphosphoglycerate synthetase from Rubrobacter xylanophilus (strain DSM 9941 / JCM 11954 / NBRC 16129 / PRD-1).